Consider the following 417-residue polypeptide: Metal-binding activator 1 (417 aa).

Residues 1 to 40 (MIIFNGNKYACASCIRGHRSSTCRHSHRMLIKVRTRGRPS) constitute a DNA-binding region (copper-fist). Zn(2+) is bound by residues cysteine 11, cysteine 14, cysteine 23, and histidine 25. 2 disordered regions span residues 128 to 198 (FLRK…IFTP) and 216 to 242 (YNSSVPGAHDSSETLTPQSTTTIAAPH). Serine 143 bears the Phosphoserine mark. The segment covering 153–178 (SEKKERSRLQQEPIRHFSNCCKKDKS) has biased composition (basic and acidic residues). 2 stretches are compositionally biased toward polar residues: residues 179 to 190 (QNPASNGKTNKA) and 228 to 238 (ETLTPQSTTTI). Tandem repeats lie at residues 264-279 (CSCEDESCPCVNCLIH) and 322-337 (CICPPDNCTCDGCFSH). Residues 264–337 (CSCEDESCPC…NCTCDGCFSH (74 aa)) are 2 X 16 AA repeat of C-X-C-X(4)-C-X-C-X-X-C-X-X-H.

Its subcellular location is the nucleus. Regulatory protein involved in Cu/Fe utilization and stress resistance. Involved in basal level transcription of FRE1 and H(2)O(2)-induced transcription of CTT1. Regulates the transcription of CTR1 and CTR3 via the copper ion responsive elements in their promoters. Required for degradation of CTR1. In Saccharomyces cerevisiae (strain ATCC 204508 / S288c) (Baker's yeast), this protein is Metal-binding activator 1 (MAC1).